The primary structure comprises 152 residues: UPF0178 protein Bcer98_3021 (152 aa).

This sequence belongs to the UPF0178 family.

The sequence is that of UPF0178 protein Bcer98_3021 from Bacillus cytotoxicus (strain DSM 22905 / CIP 110041 / 391-98 / NVH 391-98).